The primary structure comprises 173 residues: Cytochrome b6-f complex subunit 4, chloroplastic (173 aa).

A chloroplast-targeting transit peptide spans 1-14 (ESALERRSSSVVMN). A run of 3 helical transmembrane segments spans residues 49 to 69 (LLYM…GLAV), 108 to 128 (LLGV…PFIE), and 144 to 164 (SVFL…TLPI).

Belongs to the cytochrome b family. PetD subfamily. As to quaternary structure, the 4 large subunits of the cytochrome b6-f complex are cytochrome b6, subunit IV (17 kDa polypeptide, petD), cytochrome f and the Rieske protein, while the 4 small subunits are petG, petL, petM and petN. The complex functions as a dimer.

The protein resides in the plastid. It localises to the chloroplast thylakoid membrane. Functionally, component of the cytochrome b6-f complex, which mediates electron transfer between photosystem II (PSII) and photosystem I (PSI), cyclic electron flow around PSI, and state transitions. This Euglena gracilis protein is Cytochrome b6-f complex subunit 4, chloroplastic.